A 281-amino-acid polypeptide reads, in one-letter code: uncharacterized protein (281 aa).

Positions 1-23 (MKLYRSLKAALLPGICTSILLAS) are cleaved as a signal peptide. C24 is lipidated: N-palmitoyl cysteine. C24 is lipidated: S-diacylglycerol cysteine. The tract at residues 145-165 (HHDHNHMHNHEHEHEEHHDEE) is disordered. Positions 150–161 (HMHNHEHEHEEH) are enriched in basic and acidic residues.

It is found in the cell membrane. This is an uncharacterized protein from Mycoplasma genitalium (strain ATCC 33530 / DSM 19775 / NCTC 10195 / G37) (Mycoplasmoides genitalium).